The primary structure comprises 414 residues: Inositol-tetrakisphosphate 1-kinase (414 aa).

1D-myo-inositol 1,3,4-trisphosphate is bound at residue Lys-18. Residues Arg-106 and Lys-157 each coordinate ATP. One can recognise an ATP-grasp domain in the interval 117-325 (EAYMEDDRIC…IATVLQGQST (209 aa)). 1D-myo-inositol 1,3,4-trisphosphate-binding residues include His-167 and Lys-199. ATP contacts are provided by residues 188-199 (QNFINHNAVLYK), Ser-214, Ser-232, and Ser-236. Mg(2+) is bound by residues Asp-281, Asp-295, and Asn-297. 1D-myo-inositol 1,3,4-trisphosphate is bound at residue Asn-297. N6-acetyllysine; by EP300 and CREBBP occurs at positions 340 and 383. At Ser-396 the chain carries Phosphoserine. At Lys-410 the chain carries N6-acetyllysine; by EP300 and CREBBP.

This sequence belongs to the ITPK1 family. In terms of assembly, monomer. Interacts with GPS1/COPS1. Mg(2+) serves as cofactor. Acetylation by EP300 and CREBBP destabilizes ITPK1, and down-regulates enzymatic activity. Deacetylated by SIRT1. In terms of tissue distribution, expressed in brain &gt; heart &gt; skeletal muscle = kidney = pancreas = liver = placenta &gt; lung. In brain, it is expressed in cerebellum, cerebral cortex, medulla, spinal cord, occipital lobe, frontal lobe, temporal lobe and putamen.

The enzyme catalyses 1D-myo-inositol 3,4,5,6-tetrakisphosphate + ATP = 1D-myo-inositol 1,3,4,5,6-pentakisphosphate + ADP + H(+). It catalyses the reaction 1D-myo-inositol 1,3,4-trisphosphate + ATP = 1D-myo-inositol 1,3,4,5-tetrakisphosphate + ADP + H(+). It carries out the reaction 1D-myo-inositol 1,3,4-trisphosphate + ATP = 1D-myo-inositol 1,3,4,6-tetrakisphosphate + ADP + H(+). The catalysed reaction is 1D-myo-inositol 3,4,6-trisphosphate + ATP = 1D-myo-inositol 1,3,4,6-tetrakisphosphate + ADP + H(+). The enzyme catalyses 1D-myo-inositol 1,3,4-trisphosphate + 1D-myo-inositol 1,3,4,5,6-pentakisphosphate = 1D-myo-inositol 3,4,5,6-tetrakisphosphate + 1D-myo-inositol 1,3,4,6-tetrakisphosphate. It catalyses the reaction 1D-myo-inositol 1,3,4-trisphosphate + 1D-myo-inositol 1,3,4,5,6-pentakisphosphate = 1D-myo-inositol 3,4,5,6-tetrakisphosphate + 1D-myo-inositol 1,3,4,5-tetrakisphosphate. Its function is as follows. Kinase that can phosphorylate various inositol polyphosphate such as Ins(3,4,5,6)P4 or Ins(1,3,4)P3. Phosphorylates Ins(3,4,5,6)P4 at position 1 to form Ins(1,3,4,5,6)P5. This reaction is thought to have regulatory importance, since Ins(3,4,5,6)P4 is an inhibitor of plasma membrane Ca(2+)-activated Cl(-) channels, while Ins(1,3,4,5,6)P5 is not. Also phosphorylates Ins(1,3,4)P3 on O-5 and O-6 to form Ins(1,3,4,6)P4, an essential molecule in the hexakisphosphate (InsP6) pathway. Also acts as an inositol polyphosphate phosphatase that dephosphorylates Ins(1,3,4,5)P4 and Ins(1,3,4,6)P4 to Ins(1,3,4)P3, and Ins(1,3,4,5,6)P5 to Ins(3,4,5,6)P4. May also act as an isomerase that interconverts the inositol tetrakisphosphate isomers Ins(1,3,4,5)P4 and Ins(1,3,4,6)P4 in the presence of ADP and magnesium. Probably acts as the rate-limiting enzyme of the InsP6 pathway. Modifies TNF-alpha-induced apoptosis by interfering with the activation of TNFRSF1A-associated death domain. Plays an important role in MLKL-mediated necroptosis. Produces highly phosphorylated inositol phosphates such as inositolhexakisphosphate (InsP6) which bind to MLKL mediating the release of an N-terminal auto-inhibitory region leading to its activation. Essential for activated phospho-MLKL to oligomerize and localize to the cell membrane during necroptosis. The chain is Inositol-tetrakisphosphate 1-kinase from Homo sapiens (Human).